Here is a 132-residue protein sequence, read N- to C-terminus: L-ectoine synthase (132 aa).

The protein belongs to the ectoine synthase family.

The enzyme catalyses (2S)-4-acetamido-2-aminobutanoate = L-ectoine + H2O. Its pathway is amine and polyamine biosynthesis; ectoine biosynthesis; L-ectoine from L-aspartate 4-semialdehyde: step 3/3. In terms of biological role, catalyzes the circularization of gamma-N-acetyl-alpha,gamma-diaminobutyric acid (ADABA) to ectoine (1,4,5,6-tetrahydro-2-methyl-4-pyrimidine carboxylic acid), which is an excellent osmoprotectant. This chain is L-ectoine synthase, found in Alkalilimnicola ehrlichii (strain ATCC BAA-1101 / DSM 17681 / MLHE-1).